A 201-amino-acid polypeptide reads, in one-letter code: MEELTPRQNEVLRFLEGYLTQYGYPPTMRDIAAHLRISGTLGVSKHLTALERKGYIRRDPGNSRGISLVGHGSKSASLPIAGVVRAGMLQPAIEDIEGYLAIDQAQLKGGKFFLRVKGDSMVNAAILDGDLALIRPQPTAENNDIVVAMVDGEATLKAFYRERGQIRLQPRNPNMEPIIIREGEGEVAIVGKVVGIFRTLE.

The H-T-H motif DNA-binding region spans 28–48 (MRDIAAHLRISGTLGVSKHLT). Active-site for autocatalytic cleavage activity residues include Ser-120 and Lys-157.

The protein belongs to the peptidase S24 family. As to quaternary structure, homodimer.

It catalyses the reaction Hydrolysis of Ala-|-Gly bond in repressor LexA.. Represses a number of genes involved in the response to DNA damage (SOS response), including recA and lexA. In the presence of single-stranded DNA, RecA interacts with LexA causing an autocatalytic cleavage which disrupts the DNA-binding part of LexA, leading to derepression of the SOS regulon and eventually DNA repair. The chain is LexA repressor from Geobacter metallireducens (strain ATCC 53774 / DSM 7210 / GS-15).